A 292-amino-acid chain; its full sequence is Formamidopyrimidine-DNA glycosylase (292 aa).

Pro2 (schiff-base intermediate with DNA) is an active-site residue. The active-site Proton donor is the Glu3. Residue Lys61 is the Proton donor; for beta-elimination activity of the active site. DNA is bound by residues His103, Arg122, and Lys168. Residues 254–288 (DAYGREGEHCRRCGAVMRREKFMNRSSFYCPRCQP) form an FPG-type zinc finger. Residue Arg278 is the Proton donor; for delta-elimination activity of the active site.

Belongs to the FPG family. As to quaternary structure, monomer. Zn(2+) serves as cofactor.

The enzyme catalyses Hydrolysis of DNA containing ring-opened 7-methylguanine residues, releasing 2,6-diamino-4-hydroxy-5-(N-methyl)formamidopyrimidine.. The catalysed reaction is 2'-deoxyribonucleotide-(2'-deoxyribose 5'-phosphate)-2'-deoxyribonucleotide-DNA = a 3'-end 2'-deoxyribonucleotide-(2,3-dehydro-2,3-deoxyribose 5'-phosphate)-DNA + a 5'-end 5'-phospho-2'-deoxyribonucleoside-DNA + H(+). Its function is as follows. Involved in base excision repair of DNA damaged by oxidation or by mutagenic agents. Acts as a DNA glycosylase that recognizes and removes damaged bases. Has a preference for oxidized purines, such as 7,8-dihydro-8-oxoguanine (8-oxoG). Has AP (apurinic/apyrimidinic) lyase activity and introduces nicks in the DNA strand. Cleaves the DNA backbone by beta-delta elimination to generate a single-strand break at the site of the removed base with both 3'- and 5'-phosphates. The sequence is that of Formamidopyrimidine-DNA glycosylase from Mycobacterium ulcerans (strain Agy99).